The following is a 562-amino-acid chain: MNKIYCILFLSAQCLVHMGKCEPNQKPSRLTRSAKNVLLEQEPMVERSTRMSNPWKAFMEKYDIEKTHSSGIRVDLGEDAEVGNSSYRIPAGKCPVFGKGIVIQNSEVSFLTPVATGNQKLKDGGFAFPQANDHISPISIKNLRERYKENPDLMKLNDLALCKTHAASFVMEMDKNSSYRHPAVYDEDKKICYMLYLSAQENMGPRYCSKDAENKDAMFCFKPDKNETFDHLAYLSKNVVNDWQNKCPRKNLGNSKFGLWVDGNCEEIPYVQDVQAKDLRECNRIVFEASASDQPTQYEEELTDYQKIQEGFRQNDQGMIKSAFLPVGAFNSDNFKSKGRGYNWANFDTENKVCYLFNAKPTCLINDKNFIATTALSHPQEVDNEFPCSIYKDEMEREMRKESRNMSLYNVDKARIVLPRIFISNDKDSLKCPCAPEHITNSTCNFYVCNCVEKRAEIKENNEVAIKEEFKQDYQYAQGESKNQMLLIIIGITGGVCVVALASMFYFRKKAHNDKYDKMEQADGYGKPTTRKDEMLDPEASFWGEEKRASHTTPVLMEKPYY.

The signal sequence occupies residues Met-1–Cys-21. At Glu-22–Gln-484 the chain is on the extracellular side. 2 N-linked (GlcNAc...) asparagine glycosylation sites follow: Asn-84 and Asn-176. 8 cysteine pairs are disulfide-bonded: Cys-94–Cys-247, Cys-162–Cys-192, Cys-208–Cys-220, Cys-265–Cys-363, Cys-282–Cys-354, Cys-388–Cys-444, Cys-432–Cys-449, and Cys-434–Cys-451. Asn-226 carries an N-linked (GlcNAc...) asparagine glycan. Residues Asn-405 and Asn-441 are each glycosylated (N-linked (GlcNAc...) asparagine). Residues Met-485–Phe-507 form a helical membrane-spanning segment. Topologically, residues Arg-508–Tyr-562 are cytoplasmic. A disordered region spans residues Met-519–Trp-543.

It belongs to the apicomplexan parasites AMA1 family.

The protein localises to the membrane. Functionally, involved in parasite invasion of erythrocytes. In Plasmodium fragile, this protein is Apical membrane antigen 1 (AMA-1).